We begin with the raw amino-acid sequence, 149 residues long: D-aminoacyl-tRNA deacylase (149 aa).

The short motif at 137–138 is the Gly-cisPro motif, important for rejection of L-amino acids element; it reads GP.

It belongs to the DTD family. In terms of assembly, homodimer.

Its subcellular location is the cytoplasm. The enzyme catalyses glycyl-tRNA(Ala) + H2O = tRNA(Ala) + glycine + H(+). It carries out the reaction a D-aminoacyl-tRNA + H2O = a tRNA + a D-alpha-amino acid + H(+). Its function is as follows. An aminoacyl-tRNA editing enzyme that deacylates mischarged D-aminoacyl-tRNAs. Also deacylates mischarged glycyl-tRNA(Ala), protecting cells against glycine mischarging by AlaRS. Acts via tRNA-based rather than protein-based catalysis; rejects L-amino acids rather than detecting D-amino acids in the active site. By recycling D-aminoacyl-tRNA to D-amino acids and free tRNA molecules, this enzyme counteracts the toxicity associated with the formation of D-aminoacyl-tRNA entities in vivo and helps enforce protein L-homochirality. The chain is D-aminoacyl-tRNA deacylase from Fervidobacterium nodosum (strain ATCC 35602 / DSM 5306 / Rt17-B1).